A 433-amino-acid polypeptide reads, in one-letter code: L-lysine 2,3-aminomutase (433 aa).

The Radical SAM core domain occupies 122 to 334 (HRYPDRVLFY…SLIGHTTGFA (213 aa)). Cys-136, Cys-140, and Cys-143 together coordinate [4Fe-4S] cluster. Residue Cys-279 participates in Zn(2+) binding. Lys-348 bears the N6-(pyridoxal phosphate)lysine mark. Positions 389, 392, and 396 each coordinate Zn(2+).

It belongs to the radical SAM superfamily. KamA family. [4Fe-4S] cluster is required as a cofactor. The cofactor is pyridoxal 5'-phosphate. Requires Zn(2+) as cofactor.

The enzyme catalyses L-lysine = (3S)-3,6-diaminohexanoate. In terms of biological role, catalyzes the interconversion of L-alpha-lysine and L-beta-lysine. Is involved in the biosynthesis pathway of N6-acetyl-beta-lysine, a compatible solute produced by methanogenic archaea that helps cells to cope with salt stress. The chain is L-lysine 2,3-aminomutase (ablA) from Methanococcus maripaludis (strain DSM 14266 / JCM 13030 / NBRC 101832 / S2 / LL).